A 271-amino-acid polypeptide reads, in one-letter code: Aquaporin-2 (271 aa).

The Cytoplasmic segment spans residues 1 to 11; it reads MWELRSIAFSR. Residues 12 to 32 form a helical membrane-spanning segment; the sequence is AVLAEFLATLLFVFFGLGSAL. At 33–40 the chain is on the extracellular side; the sequence is QWASSPPS. A helical transmembrane segment spans residues 41–59; sequence VLQIAVAFGLGIGILVQAL. Residues 60 to 64 lie on the Cytoplasmic side of the membrane; sequence GHVSG. Positions 65-74 form an intramembrane region, discontinuously helical; the sequence is AHINPAVTVA. The short motif at 68-70 is the NPA 1 element; that stretch reads NPA. Residues 75–85 lie on the Cytoplasmic side of the membrane; sequence CLVGCHVSFLR. A helical membrane pass occupies residues 86–107; sequence AAFYVAAQLLGAVAGAAILHEI. Residues 108-127 are Extracellular-facing; the sequence is TPVEIRGDLAVNALHNNATA. Asn-124 carries an N-linked (GlcNAc...) asparagine glycan. Residues 128–148 traverse the membrane as a helical segment; it reads GQAVTVELFLTMQLVLCIFAS. The Cytoplasmic portion of the chain corresponds to 149–156; it reads TDERRGDN. Residues 157–176 traverse the membrane as a helical segment; it reads LGSPALSIGFSVTLGHLLGI. Residues 177-180 are Extracellular-facing; the sequence is YFTG. The segment at residues 181 to 193 is an intramembrane region (discontinuously helical); that stretch reads CSMNPARSLAPAV. Positions 184 to 186 match the NPA 2 motif; the sequence is NPA. Over 194 to 201 the chain is Extracellular; it reads VTGKFDDH. The chain crosses the membrane as a helical span at residues 202 to 222; that stretch reads WVFWIGPLVGAIIGSLLYNYL. Over 223 to 271 the chain is Cytoplasmic; it reads LFPSAKSLQERLAVLKGLEPDTDWEEREVRRRQSVELHSPQSLPRGSKA. Residues 251 to 271 form a disordered region; it reads VRRRQSVELHSPQSLPRGSKA. Phosphoserine occurs at positions 256, 261, 264, and 269. Residues 261–271 show a composition bias toward polar residues; it reads SPQSLPRGSKA.

Belongs to the MIP/aquaporin (TC 1.A.8) family. In terms of assembly, homotetramer. In terms of processing, ser-256 phosphorylation is necessary and sufficient for expression at the apical membrane. Endocytosis is not phosphorylation-dependent. N-glycosylated. Detected in kidney, in cortical and the medullary collecting tubules (at protein level). Detected in kidney medulla and cortex.

The protein resides in the apical cell membrane. It localises to the basolateral cell membrane. The protein localises to the cell membrane. It is found in the cytoplasmic vesicle membrane. Its subcellular location is the golgi apparatus. The protein resides in the trans-Golgi network membrane. It catalyses the reaction H2O(in) = H2O(out). The enzyme catalyses glycerol(in) = glycerol(out). Functionally, forms a water-specific channel that provides the plasma membranes of renal collecting duct with high permeability to water, thereby permitting water to move in the direction of an osmotic gradient. Plays an essential role in renal water homeostasis. Could also be permeable to glycerol. The protein is Aquaporin-2 of Rattus norvegicus (Rat).